The following is a 264-amino-acid chain: Glucosamine-6-phosphate deaminase (264 aa).

Catalysis depends on Asp67, which acts as the Proton acceptor; for enolization step. Asn136 serves as the catalytic For ring-opening step. Catalysis depends on His138, which acts as the Proton acceptor; for ring-opening step. The For ring-opening step role is filled by Glu143.

This sequence belongs to the glucosamine/galactosamine-6-phosphate isomerase family. NagB subfamily. In terms of assembly, homohexamer.

The catalysed reaction is alpha-D-glucosamine 6-phosphate + H2O = beta-D-fructose 6-phosphate + NH4(+). It participates in amino-sugar metabolism; N-acetylneuraminate degradation; D-fructose 6-phosphate from N-acetylneuraminate: step 5/5. In terms of biological role, catalyzes the reversible isomerization-deamination of glucosamine 6-phosphate (GlcN6P) to form fructose 6-phosphate (Fru6P) and ammonium ion. The polypeptide is Glucosamine-6-phosphate deaminase (Shewanella woodyi (strain ATCC 51908 / MS32)).